A 137-amino-acid polypeptide reads, in one-letter code: Small ribosomal subunit protein uS11 (137 aa).

Residues 1–11 (MPPKSRSTGPK) are compositionally biased toward polar residues. Disordered regions lie at residues 1–28 (MPPK…PHGA) and 117–137 (TISD…RRRV). Positions 12-21 (KTQKARRRDK) are enriched in basic residues.

Belongs to the universal ribosomal protein uS11 family. In terms of assembly, part of the 30S ribosomal subunit. Interacts with proteins S7 and S18. Binds to IF-3.

Located on the platform of the 30S subunit, it bridges several disparate RNA helices of the 16S rRNA. Forms part of the Shine-Dalgarno cleft in the 70S ribosome. This is Small ribosomal subunit protein uS11 from Rhodococcus opacus (strain B4).